The chain runs to 141 residues: Hemoglobin subunit alpha-2 (141 aa).

The Globin domain maps to 1-141; sequence VLSEGNKKII…VTYQLSSLYR (141 aa). H59 is an O2 binding site. H88 is a binding site for heme b.

The protein belongs to the globin family. Heterotetramer of two alpha chains and two beta chains. As to expression, red blood cells.

Functionally, involved in oxygen transport from the lung to the various peripheral tissues. This Torpedo marmorata (Marbled electric ray) protein is Hemoglobin subunit alpha-2.